Here is a 760-residue protein sequence, read N- to C-terminus: U-box domain-containing protein 3 (760 aa).

Residues 146-217 (LMELMENALR…EQTEQLIELV (72 aa)) adopt a coiled-coil conformation. The U-box domain maps to 237–311 (SIPPYFRCPL…ASWLEANRIN (75 aa)). A compositionally biased stretch (polar residues) spans 424–434 (ILGNHQSSSEM). Residues 424–448 (ILGNHQSSSEMSPKKNLESSNNVNH) are disordered. ARM repeat units follow at residues 504–543 (IENR…NLSI), 545–584 (ELNK…SLSV), 586–626 (QVNR…NLSI), 628–666 (HDNK…NLSA), and 668–707 (GEGR…QLCL).

It carries out the reaction S-ubiquitinyl-[E2 ubiquitin-conjugating enzyme]-L-cysteine + [acceptor protein]-L-lysine = [E2 ubiquitin-conjugating enzyme]-L-cysteine + N(6)-ubiquitinyl-[acceptor protein]-L-lysine.. It functions in the pathway protein modification; protein ubiquitination. Its function is as follows. Functions as an E3 ubiquitin ligase. The protein is U-box domain-containing protein 3 (PUB3) of Arabidopsis thaliana (Mouse-ear cress).